The following is a 115-amino-acid chain: Na(+)/H(+) antiporter subunit C1 (115 aa).

Transmembrane regions (helical) follow at residues 1–21 (MEILMIFVCGILTAMSVYLIL), 28–48 (IIIGTTLQTHTANLFLITMGG), and 72–92 (LILTAIVISFSVTAFFLVLAF).

The protein belongs to the CPA3 antiporters (TC 2.A.63) subunit C family. May form a heterooligomeric complex that consists of seven subunits: mnhA1, mnhB1, mnhC1, mnhD1, mnhE1, mnhF1 and mnhG1.

It is found in the cell membrane. Its function is as follows. Mnh complex is a Na(+)/H(+) antiporter involved in Na(+) excretion. In Staphylococcus saprophyticus subsp. saprophyticus (strain ATCC 15305 / DSM 20229 / NCIMB 8711 / NCTC 7292 / S-41), this protein is Na(+)/H(+) antiporter subunit C1 (mnhC1).